Consider the following 158-residue polypeptide: GTP-dependent dephospho-CoA kinase (158 aa).

GTP contacts are provided by D35, I36, V37, D54, K56, E109, and D132.

Belongs to the GTP-dependent DPCK family.

It catalyses the reaction 3'-dephospho-CoA + GTP = GDP + CoA + H(+). Its pathway is cofactor biosynthesis; coenzyme A biosynthesis. Catalyzes the GTP-dependent phosphorylation of the 3'-hydroxyl group of dephosphocoenzyme A to form coenzyme A (CoA). The sequence is that of GTP-dependent dephospho-CoA kinase from Methanocaldococcus jannaschii (strain ATCC 43067 / DSM 2661 / JAL-1 / JCM 10045 / NBRC 100440) (Methanococcus jannaschii).